A 143-amino-acid polypeptide reads, in one-letter code: Transmembrane protein 80 (143 aa).

Helical transmembrane passes span 21–41 (MLFY…LLMI), 55–75 (LVLD…RLYL), 99–119 (ALLS…DWAL), and 121–141 (ATLL…IAAF).

It is found in the membrane. The protein localises to the cell projection. Its subcellular location is the cilium. This chain is Transmembrane protein 80, found in Homo sapiens (Human).